The following is a 169-amino-acid chain: Fumarase E (169 aa).

It belongs to the MtlR/FumE family.

It catalyses the reaction (S)-malate = fumarate + H2O. Functionally, in vitro catalyzes the addition of water to fumarate, forming malate. Cannot catalyze the reverse reaction. Cannot use the cis-isomer maleate as substrate. The protein is Fumarase E of Escherichia coli (strain K12).